A 175-amino-acid chain; its full sequence is Large ribosomal subunit protein uL10 (175 aa).

The protein belongs to the universal ribosomal protein uL10 family. As to quaternary structure, part of the ribosomal stalk of the 50S ribosomal subunit. The N-terminus interacts with L11 and the large rRNA to form the base of the stalk. The C-terminus forms an elongated spine to which L12 dimers bind in a sequential fashion forming a multimeric L10(L12)X complex.

Functionally, forms part of the ribosomal stalk, playing a central role in the interaction of the ribosome with GTP-bound translation factors. The chain is Large ribosomal subunit protein uL10 (rplJ) from Xylella fastidiosa (strain 9a5c).